The following is a 101-amino-acid chain: MGAMAKPDCIITCDSKNLTIKTESTLKTTQFSGTLGEKFEENTADGRRTQTVCNFTDGALVQHQEWDGKESTITRKLKDGKLVVERVMNHVACTRIYEKAQ.

This sequence belongs to the calycin superfamily. Fatty-acid binding protein (FABP) family.

High specificity for fatty acids. The polypeptide is Putative fatty acid-binding protein 5-like protein 3 (FABP5P3) (Homo sapiens (Human)).